Consider the following 935-residue polypeptide: Probable mediator of RNA polymerase II transcription subunit 15c (935 aa).

Positions 1–13 (MEGNTNWKPNEQG) are enriched in polar residues. 5 disordered regions span residues 1–28 (MEGNTNWKPNEQGGNRDAANNRIDWRSQ), 170–190 (NLPTSRPNNRDQQGAFQVSSS), 495–526 (SSVQSLQKQKRFHHRQMQQQQPQQGNHQHQMQ), 548–611 (QQVS…PVPG), and 635–654 (SSSKLGTQETPLLFVPPPEP). Low complexity predominate over residues 511–526 (MQQQQPQQGNHQHQMQ). Polar residues-rich tracts occupy residues 548–577 (QQVSSSQRQVPKQESNVSSSQIQNHSSPQL) and 635–644 (SSSKLGTQET).

The protein belongs to the plant Mediator complex subunit 15 family. As to quaternary structure, component of the Mediator complex.

The protein localises to the nucleus. In terms of biological role, component of the Mediator complex, a coactivator involved in the regulated transcription of nearly all RNA polymerase II-dependent genes. Mediator functions as a bridge to convey information from gene-specific regulatory proteins to the basal RNA polymerase II transcription machinery. The Mediator complex, having a compact conformation in its free form, is recruited to promoters by direct interactions with regulatory proteins and serves for the assembly of a functional preinitiation complex with RNA polymerase II and the general transcription factors. The protein is Probable mediator of RNA polymerase II transcription subunit 15c (MED15C) of Arabidopsis thaliana (Mouse-ear cress).